A 331-amino-acid chain; its full sequence is Protein RecA (331 aa).

ATP is bound at residue 66 to 73 (GPESSGKT).

This sequence belongs to the RecA family.

The protein localises to the cytoplasm. In terms of biological role, can catalyze the hydrolysis of ATP in the presence of single-stranded DNA, the ATP-dependent uptake of single-stranded DNA by duplex DNA, and the ATP-dependent hybridization of homologous single-stranded DNAs. It interacts with LexA causing its activation and leading to its autocatalytic cleavage. In Acholeplasma laidlawii, this protein is Protein RecA.